A 252-amino-acid polypeptide reads, in one-letter code: Tumor necrosis factor ligand superfamily member 15 (252 aa).

The Cytoplasmic portion of the chain corresponds to 1–39 (MAEELGLGFGEGVPVEVLPEGCRHRPEARAGLAARSKAC). Residues 40-60 (LALTCCLLSFPILAGLSTLLM) form a helical; Signal-anchor for type II membrane protein membrane-spanning segment. The Extracellular segment spans residues 61–252 (AGQLRVPGKD…DKTFFGAFLL (192 aa)). The THD domain maps to 96–252 (PRAHLTIKKQ…DKTFFGAFLL (157 aa)). N-linked (GlcNAc...) asparagine glycosylation occurs at asparagine 137. A disulfide bridge connects residues cysteine 163 and cysteine 203. N-linked (GlcNAc...) asparagine glycosylation is present at asparagine 230.

This sequence belongs to the tumor necrosis factor family. In terms of assembly, homotrimer.

The protein localises to the membrane. Its function is as follows. Receptor for TNFRSF25 and TNFRSF6B. Mediates activation of NF-kappa-B. Inhibits vascular endothelial growth and angiogenesis (in vitro). Promotes activation of caspases and apoptosis. Promotes splenocyte alloactivation. The polypeptide is Tumor necrosis factor ligand superfamily member 15 (Tnfsf15) (Mus musculus (Mouse)).